A 438-amino-acid polypeptide reads, in one-letter code: MRITKIAPAQSFEREFDGIATDKSISHRAAIFALLSSAPCEVEGYLMGEDTLHTLHIARELGLGIEQKGSVLRLIPPRNGICEPHKVLDCGNAGTGMRLFAGLLSGVKGHFVLTGDEYLNARPMKRITEPLSAIGACINGRENNAYAPLSIVGAQLQTFDYKSTIASAQVKSAMILAGLQTAGQSRFYEPLLSRNHTENMLRGMGVHIQERECEDGGYEVVFEGLKETNKQLEAFKFQVPADPSSAFYFAVAACVLGAKVKLKNVLLNKTRIEAFKILESMGAKVAYHHLSSLYEEVGDIEVQGGSLKAVRVDSRIAWLIDEIPALSICFALAKGKSEVYNAKELRVKESDRIRATITNLRVMGIRCEEFDDGFSVYGGELKRARVSSFGDHRIAMSFAIAQLACGGEIEDSECIDVSFPHFLTLLSQITAVENANES.

3-phosphoshikimate contacts are provided by Lys23, Ser24, and Arg28. Phosphoenolpyruvate is bound at residue Lys23. 2 residues coordinate phosphoenolpyruvate: Gly94 and Arg122. Ser167, Gln169, Asp321, and Lys348 together coordinate 3-phosphoshikimate. A phosphoenolpyruvate-binding site is contributed by Gln169. The active-site Proton acceptor is Asp321. 2 residues coordinate phosphoenolpyruvate: Arg352 and Arg393.

It belongs to the EPSP synthase family. Monomer.

The protein localises to the cytoplasm. The enzyme catalyses 3-phosphoshikimate + phosphoenolpyruvate = 5-O-(1-carboxyvinyl)-3-phosphoshikimate + phosphate. It participates in metabolic intermediate biosynthesis; chorismate biosynthesis; chorismate from D-erythrose 4-phosphate and phosphoenolpyruvate: step 6/7. Catalyzes the transfer of the enolpyruvyl moiety of phosphoenolpyruvate (PEP) to the 5-hydroxyl of shikimate-3-phosphate (S3P) to produce enolpyruvyl shikimate-3-phosphate and inorganic phosphate. The sequence is that of 3-phosphoshikimate 1-carboxyvinyltransferase from Helicobacter hepaticus (strain ATCC 51449 / 3B1).